The chain runs to 327 residues: Movement protein (327 aa).

The stretch at 297 to 327 forms a coiled coil; sequence SASSSNTENELARVSQNIDLLKNKLKEICGE.

Belongs to the caulimoviridae movement protein family. Homotrimer, through the coiled-coil domain. Interacts with VAP. May interact (via N-terminus) with host prenylated Rab acceptor protein 1D (PRA1D).

Its subcellular location is the host cell junction. It is found in the host plasmodesma. Transports viral genome to neighboring plant cells directly through plasmosdesmata, without any budding. The movement protein allows efficient cell to cell propagation, by bypassing the host cell wall barrier. Acts by forming tubules structures that increase the size exclusion limit (SEL) of plasmodesmata, thereby allowing viral ribonucleocapsids to spread directly to neighboring cells. This chain is Movement protein, found in Arabidopsis thaliana (Mouse-ear cress).